A 186-amino-acid chain; its full sequence is Ribosome-recycling factor (186 aa).

It belongs to the RRF family.

It localises to the cytoplasm. Its function is as follows. Responsible for the release of ribosomes from messenger RNA at the termination of protein biosynthesis. May increase the efficiency of translation by recycling ribosomes from one round of translation to another. The polypeptide is Ribosome-recycling factor (Polaromonas naphthalenivorans (strain CJ2)).